Consider the following 466-residue polypeptide: Soluble pyridine nucleotide transhydrogenase (466 aa).

FAD is bound at residue 36–45 (ERYQNVGGGC).

It belongs to the class-I pyridine nucleotide-disulfide oxidoreductase family. Requires FAD as cofactor.

It localises to the cytoplasm. It carries out the reaction NAD(+) + NADPH = NADH + NADP(+). Its function is as follows. Conversion of NADPH, generated by peripheral catabolic pathways, to NADH, which can enter the respiratory chain for energy generation. The chain is Soluble pyridine nucleotide transhydrogenase from Escherichia coli O127:H6 (strain E2348/69 / EPEC).